The sequence spans 300 residues: Cell surface glycoprotein CD200 receptor 1-A (300 aa).

An N-terminal signal peptide occupies residues 1 to 24 (MEIAGKAVCVFLLLAIIKLRRSEG). The Ig-like V-type domain maps to 25 to 124 (INRVSANLGH…GNFHRLYHLT (100 aa)). Residues 25-213 (INRVSANLGH…SINCSSSYRD (189 aa)) are Extracellular-facing. 2 disulfides stabilise this stretch: cysteine 40-cysteine 108 and cysteine 143-cysteine 192. N-linked (GlcNAc...) asparagine glycans are attached at residues asparagine 45, asparagine 76, asparagine 105, asparagine 171, asparagine 200, and asparagine 206. The region spanning 122–206 (HLTVIVAPRM…ATLNETKSIN (85 aa)) is the Ig-like C2-type domain. The helical transmembrane segment at 214-234 (LILCIAIILSFLIIITFMAVI) threads the bilayer. At 235 to 300 (YYLKLHGCRF…NLPQGQSPAT (66 aa)) the chain is on the cytoplasmic side.

This sequence belongs to the CD200R family. Post-translationally, glycosylated. Phosphorylated. In terms of tissue distribution, highly expressed in macrophages, peripheral blood lymphocytes (PBL) and peripheral blood mononuclear cells (PBMC). Weakly expressed in bursa, thymus, spleen, liver and brain.

The protein resides in the membrane. It localises to the secreted. The sequence is that of Cell surface glycoprotein CD200 receptor 1-A (CD200R1A) from Gallus gallus (Chicken).